Reading from the N-terminus, the 147-residue chain is uncharacterized protein (147 aa).

A Rhodanese domain is found at 52 to 145 (YDRCLLIIDA…WLSNNYPTVC (94 aa)).

This is an uncharacterized protein from Buchnera aphidicola subsp. Baizongia pistaciae (strain Bp).